The chain runs to 302 residues: Cyclopropane mycolic acid synthase 2 (302 aa).

S-adenosyl-L-methionine-binding positions include 41 to 42, 76 to 84, 102 to 107, and 131 to 132; these read YS, LLDIGCGWG, TLSENQ, and WE. Residue Cys-284 is part of the active site.

It belongs to the CFA/CMAS family. Homodimer.

It localises to the cytoplasm. It catalyses the reaction a 1-acyl-2-(9Z)-enoyl-sn-glycero-3-phospholipid + S-adenosyl-L-methionine = a 1-acyl-2-(9-cyclopronane)-acyl-sn-glycero-3-phospholipid + S-adenosyl-L-homocysteine + H(+). The protein operates within lipid metabolism; mycolic acid biosynthesis. Its function is as follows. Catalyzes the formation of trans cyclopropanated ketomycolate or methoxymycolate through the conversion of a double bond to a cyclopropane ring at the proximal position of an oxygenated mycolic acid via the transfer of a methylene group from S-adenosyl-L-methionine. In the absence of MmaA2, CmaA2 has a non-specific cis-cyclopropanating activity and is able to catalyze the conversion of a double bond to a cis cyclopropane ring at the distal position of an alpha mycolic acid. Cyclopropanated mycolic acids are key factors participating in cell envelope permeability, host immunomodulation and persistence. The protein is Cyclopropane mycolic acid synthase 2 (cmaA2) of Mycobacterium bovis (strain ATCC BAA-935 / AF2122/97).